The chain runs to 279 residues: Small ribosomal subunit protein uS2 (279 aa).

The segment at 232-260 (KVDMEAAGENAPKGAGKKKNTKARMDKAE) is disordered.

It belongs to the universal ribosomal protein uS2 family.

The protein is Small ribosomal subunit protein uS2 of Phocaeicola vulgatus (strain ATCC 8482 / DSM 1447 / JCM 5826 / CCUG 4940 / NBRC 14291 / NCTC 11154) (Bacteroides vulgatus).